Consider the following 457-residue polypeptide: Flavohemoprotein-2 (457 aa).

One can recognise a Globin domain in the interval 2 to 157 (ALSEDTIKAV…LADLLIKREE (156 aa)). Histidine 106 contributes to the heme b binding site. Residues tyrosine 116 and glutamate 156 each act as charge relay system in the active site. The interval 168-456 (GGWRQTRTFR…FEMFGPFKAS (289 aa)) is reductase. The 108-residue stretch at 171-278 (RQTRTFRVEE…APPYGDFFLR (108 aa)) folds into the FAD-binding FR-type domain. Residues tyrosine 210 and 227–230 (RQYS) each bind FAD. An NADP(+)-binding site is contributed by 320–325 (GIGQTP). 449-452 (MFGP) is a binding site for FAD.

This sequence belongs to the globin family. Two-domain flavohemoproteins subfamily. In the C-terminal section; belongs to the flavoprotein pyridine nucleotide cytochrome reductase family. Monomer. Requires heme b as cofactor. FAD is required as a cofactor.

The catalysed reaction is 2 nitric oxide + NADPH + 2 O2 = 2 nitrate + NADP(+) + H(+). It catalyses the reaction 2 nitric oxide + NADH + 2 O2 = 2 nitrate + NAD(+) + H(+). Its function is as follows. Flavohemoprotein involved in nitric oxide (NO) detoxification in an aerobic process, termed nitric oxide dioxygenase (NOD) reaction that utilizes O(2) and NAD(P)H to convert NO to nitrate, which protects the protozoan parasite from various noxious nitrogen compounds. Therefore, plays a central role in the inducible response to nitrosative stress. May also be involved in O(2) detoxification. The chain is Flavohemoprotein-2 (hmpA-2) from Giardia intestinalis (strain P15) (Giardia lamblia).